Consider the following 110-residue polypeptide: U1-lycotoxin-Ls1ee (110 aa).

The first 20 residues, 1–20 (MKFVLLFGVLLVTLFSYSSA), serve as a signal peptide directing secretion. A propeptide spanning residues 21-44 (EMLDDFDQADEDELLSLIEKEEAR) is cleaved from the precursor. 4 disulfide bridges follow: Cys47-Cys62, Cys54-Cys71, Cys61-Cys89, and Cys73-Cys87.

It belongs to the neurotoxin 19 (CSTX) family. 03 subfamily. As to expression, expressed by the venom gland.

The protein localises to the secreted. The polypeptide is U1-lycotoxin-Ls1ee (Lycosa singoriensis (Wolf spider)).